A 185-amino-acid chain; its full sequence is Elongation factor P (185 aa).

Belongs to the elongation factor P family.

It is found in the cytoplasm. It participates in protein biosynthesis; polypeptide chain elongation. In terms of biological role, involved in peptide bond synthesis. Stimulates efficient translation and peptide-bond synthesis on native or reconstituted 70S ribosomes in vitro. Probably functions indirectly by altering the affinity of the ribosome for aminoacyl-tRNA, thus increasing their reactivity as acceptors for peptidyl transferase. The protein is Elongation factor P of Streptococcus equi subsp. zooepidemicus (strain MGCS10565).